The sequence spans 161 residues: Transcription antitermination protein NusB (161 aa).

The protein belongs to the NusB family.

Functionally, involved in transcription antitermination. Required for transcription of ribosomal RNA (rRNA) genes. Binds specifically to the boxA antiterminator sequence of the ribosomal RNA (rrn) operons. The protein is Transcription antitermination protein NusB of Syntrophus aciditrophicus (strain SB).